The sequence spans 294 residues: 4-hydroxybenzoate octaprenyltransferase (294 aa).

The next 7 membrane-spanning stretches (helical) occupy residues 37–57 (LWAM…WIFF), 101–121 (LAVA…LNAL), 142–162 (FFAI…PMAF), 169–189 (VPFV…AYDT), 219–239 (IMIC…LLGL), 241–261 (WPYY…YTLI), and 271–293 (AAFR…AYLL).

This sequence belongs to the UbiA prenyltransferase family. Mg(2+) serves as cofactor.

It localises to the cell inner membrane. It carries out the reaction all-trans-octaprenyl diphosphate + 4-hydroxybenzoate = 4-hydroxy-3-(all-trans-octaprenyl)benzoate + diphosphate. The protein operates within cofactor biosynthesis; ubiquinone biosynthesis. Its function is as follows. Catalyzes the prenylation of para-hydroxybenzoate (PHB) with an all-trans polyprenyl group. Mediates the second step in the final reaction sequence of ubiquinone-8 (UQ-8) biosynthesis, which is the condensation of the polyisoprenoid side chain with PHB, generating the first membrane-bound Q intermediate 3-octaprenyl-4-hydroxybenzoate. This is 4-hydroxybenzoate octaprenyltransferase from Cupriavidus metallidurans (strain ATCC 43123 / DSM 2839 / NBRC 102507 / CH34) (Ralstonia metallidurans).